Consider the following 41-residue polypeptide: Photosystem I reaction center subunit IX (41 aa).

The helical transmembrane segment at 7-27 (YLSTAPVLATLWFGLLAGILI) threads the bilayer.

It belongs to the PsaJ family.

The protein localises to the plastid. Its subcellular location is the chloroplast thylakoid membrane. Functionally, may help in the organization of the PsaE and PsaF subunits. The polypeptide is Photosystem I reaction center subunit IX (Chara vulgaris (Common stonewort)).